The chain runs to 176 residues: MSSNQELVVLGKLGSSHGIKGWLKITSYTDSVEGIFDYSPWLIKEQGVWREVKVAQWRFQGKAVVAELEGVATREHAQMLTNCEIAIMPEQMKDLDDSEFYHRDLIGCEVTNINGYNMGIVDQIVETGSNDVLLIKANAKDAFGKAERMIPFVPEQFIKQVDLQGKQILVDWDPDF.

The PRC barrel domain maps to 97–176 (DSEFYHRDLI…QILVDWDPDF (80 aa)).

This sequence belongs to the RimM family. In terms of assembly, binds ribosomal protein uS19.

The protein resides in the cytoplasm. Functionally, an accessory protein needed during the final step in the assembly of 30S ribosomal subunit, possibly for assembly of the head region. Essential for efficient processing of 16S rRNA. May be needed both before and after RbfA during the maturation of 16S rRNA. It has affinity for free ribosomal 30S subunits but not for 70S ribosomes. This Shewanella frigidimarina (strain NCIMB 400) protein is Ribosome maturation factor RimM.